The following is a 1127-amino-acid chain: Zinc finger protein basonuclin-2 (1127 aa).

The segment at 44–67 (SEEAEVDVRERDTQRDREPKRARD) is disordered. The span at 49–67 (VDVRERDTQRDREPKRARD) shows a compositional bias: basic and acidic residues. Lysine 305 is covalently cross-linked (Glycyl lysine isopeptide (Lys-Gly) (interchain with G-Cter in SUMO2)). A disordered region spans residues 386-450 (STQNEYNESS…DLSKTEHPKS (65 aa)). Residues 389–400 (NEYNESSESEVS) show a composition bias toward low complexity. The segment covering 403–422 (PYKSDQTPNRNALTSITNVE) has biased composition (polar residues). Glycyl lysine isopeptide (Lys-Gly) (interchain with G-Cter in SUMO2) cross-links involve residues lysine 424, lysine 444, and lysine 449. The segment at 469-492 (VFCNACGKTFYDKGTLKIHYNAVH) adopts a C2H2-type 1 zinc-finger fold. At serine 589 the chain carries Phosphoserine. Lysine 669 is covalently cross-linked (Glycyl lysine isopeptide (Lys-Gly) (interchain with G-Cter in SUMO2)). Positions 675-772 (IDTADEFDDE…EESMEGDEHL (98 aa)) are disordered. Over residues 676-689 (DTADEFDDEDDDPN) the composition is skewed to acidic residues. Composition is skewed to basic and acidic residues over residues 698-708 (MSHDNHCHSQD) and 747-772 (ERDY…DEHL). The segment at 861 to 884 (KICYVCKKSFKSSYSVKLHYRNVH) adopts a C2H2-type 2 zinc-finger fold. Glycyl lysine isopeptide (Lys-Gly) (interchain with G-Cter in SUMO2) cross-links involve residues lysine 922 and lysine 947. Disordered stretches follow at residues 955–976 (LGLD…HLNG) and 996–1041 (LQSS…TLPG). Residues 1010–1023 (AGSDEGILLDDIDG) are compositionally biased toward acidic residues. 2 consecutive C2H2-type zinc fingers follow at residues 1063 to 1086 (IMCN…KTVH) and 1091 to 1118 (HKCK…PNLH). A disordered region spans residues 1107–1127 (SRNRHSQNPNLHKNIPFTSID).

In terms of tissue distribution, highly expressed in ovary, testis and kidney. Expressed at moderate levels in skin and small intestine, and at lower levels in lung. Trace amounts of expression detected in liver and colon. Not detected in brain, spleen or thymus.

Its subcellular location is the nucleus. Probable transcription factor specific for skin keratinocytes. May play a role in the differentiation of spermatozoa and oocytes. May also play an important role in early urinary-tract development. The sequence is that of Zinc finger protein basonuclin-2 from Mus musculus (Mouse).